A 734-amino-acid polypeptide reads, in one-letter code: Photosystem I P700 chlorophyll a apoprotein A2 (734 aa).

8 consecutive transmembrane segments (helical) span residues 46–69 (IFAS…FHVA), 135–158 (LYTG…LHLQ), 175–199 (LNHH…HVAI), 273–291 (MAHH…GHMY), 330–353 (IHFQ…QHMY), 369–395 (AALY…IFFI), 417–439 (AIIS…LYVH), and 517–535 (FLVH…LILV). Positions 559 and 568 each coordinate [4Fe-4S] cluster. 2 helical membrane passes run 575–596 (AFYL…YWHW) and 643–665 (LSVW…MFLI). The chlorophyll a site is built by H654, M662, and Y670. Residue W671 coordinates phylloquinone. The helical transmembrane segment at 707–727 (LVGLAHFSVGYIFTYAAFLIA) threads the bilayer.

It belongs to the PsaA/PsaB family. In terms of assembly, the PsaA/B heterodimer binds the P700 chlorophyll special pair and subsequent electron acceptors. PSI consists of a core antenna complex that captures photons, and an electron transfer chain that converts photonic excitation into a charge separation. The eukaryotic PSI reaction center is composed of at least 11 subunits. Requires P700 is a chlorophyll a/chlorophyll a' dimer, A0 is one or more chlorophyll a, A1 is one or both phylloquinones and FX is a shared 4Fe-4S iron-sulfur center. as cofactor.

The protein resides in the plastid. Its subcellular location is the chloroplast thylakoid membrane. The catalysed reaction is reduced [plastocyanin] + hnu + oxidized [2Fe-2S]-[ferredoxin] = oxidized [plastocyanin] + reduced [2Fe-2S]-[ferredoxin]. PsaA and PsaB bind P700, the primary electron donor of photosystem I (PSI), as well as the electron acceptors A0, A1 and FX. PSI is a plastocyanin-ferredoxin oxidoreductase, converting photonic excitation into a charge separation, which transfers an electron from the donor P700 chlorophyll pair to the spectroscopically characterized acceptors A0, A1, FX, FA and FB in turn. Oxidized P700 is reduced on the lumenal side of the thylakoid membrane by plastocyanin. The chain is Photosystem I P700 chlorophyll a apoprotein A2 from Triticum aestivum (Wheat).